Consider the following 308-residue polypeptide: MGTEEPARKFYTAPMTRYAEVAAFTTVPGQGNRAGVVLDAGELTGEQMQRLAAFLEAPETVFVTRLSDGLGRVRYFTPTQEVDFCGHATVALGRVLAQAGRWRGEALELETLAGRIPLRLVLDAGGGECRVWMHQPAFGTRAVGRGWHRELAEALGLSDRLLHRGLPLAAASTGLWSVFLPLLDASLLEGLEPDLPRIAELSRELGVVSVYAYAPVGVNRFAARDFAPLVGIPEDPVTGSAGGALLALLASEGRLPLRGNRASGLIYQGHALGTPGEIEVEVEVRGTRVEAVQVGGCAAVEREGVWPG.

Glu59 is an active-site residue.

Belongs to the PhzF family.

This is an uncharacterized protein from Deinococcus radiodurans (strain ATCC 13939 / DSM 20539 / JCM 16871 / CCUG 27074 / LMG 4051 / NBRC 15346 / NCIMB 9279 / VKM B-1422 / R1).